We begin with the raw amino-acid sequence, 566 residues long: Zinc finger protein 704 (566 aa).

Disordered regions lie at residues 1–148 (MQAR…ARGA), 166–203 (DFRR…LDQE), and 253–324 (PLVR…DEAD). A compositionally biased stretch (low complexity) spans 12 to 31 (LGSRRGGAAPAPAPEAAALG). The segment covering 32 to 55 (LPPPGPSPAAAPGSWRPPLPPPRG) has biased composition (pro residues). A compositionally biased stretch (low complexity) spans 56–72 (TGPSRAAAASSPVLLLL). Basic and acidic residues predominate over residues 91-100 (RVTEKPRGVA). Residues 101–128 (EEEDDDEEEDEEVVVEVVDGDEDDEDAE) are compositionally biased toward acidic residues. Basic and acidic residues predominate over residues 186 to 203 (EDVRTADTKKTSRVLDQE). The segment covering 267 to 290 (SGSWKEGAPSSSSSSGYWSWSAPS) has biased composition (low complexity). A C2H2-type zinc finger spans residues 346–371 (FKCLWKSCGKVLNTAAGIQKHIRAVH). Phosphoserine occurs at positions 378 and 381. Disordered regions lie at residues 409–436 (VSPS…CAKT) and 497–535 (PVSP…PRGE). Residues 471 to 566 (GSAKFTPNGS…WKKACQRFID (96 aa)) form a sufficient for binding to RE2 sequence motifs region. The CR1 signature appears at 537-541 (KKCRK). The short motif at 555–559 (CRWKK) is the CR2 element.

The protein resides in the nucleus. Functionally, transcription factor which binds to RE2 sequence elements in the MYOD1 enhancer. The sequence is that of Zinc finger protein 704 from Mus musculus (Mouse).